The chain runs to 92 residues: Small ribosomal subunit protein uS19 (92 aa).

It belongs to the universal ribosomal protein uS19 family.

Protein S19 forms a complex with S13 that binds strongly to the 16S ribosomal RNA. This is Small ribosomal subunit protein uS19 from Cellvibrio japonicus (strain Ueda107) (Pseudomonas fluorescens subsp. cellulosa).